Here is a 208-residue protein sequence, read N- to C-terminus: V-type ATP synthase subunit D (208 aa).

The protein belongs to the V-ATPase D subunit family.

Its function is as follows. Produces ATP from ADP in the presence of a proton gradient across the membrane. This is V-type ATP synthase subunit D from Chlamydia caviae (strain ATCC VR-813 / DSM 19441 / 03DC25 / GPIC) (Chlamydophila caviae).